A 218-amino-acid polypeptide reads, in one-letter code: Pyrrolidone-carboxylate peptidase 2 (218 aa).

Residues glutamate 83, cysteine 146, and histidine 170 contribute to the active site.

The protein belongs to the peptidase C15 family. As to quaternary structure, homotetramer.

It localises to the cytoplasm. The catalysed reaction is Release of an N-terminal pyroglutamyl group from a polypeptide, the second amino acid generally not being Pro.. Its function is as follows. Removes 5-oxoproline from various penultimate amino acid residues except L-proline. The protein is Pyrrolidone-carboxylate peptidase 2 of Photorhabdus laumondii subsp. laumondii (strain DSM 15139 / CIP 105565 / TT01) (Photorhabdus luminescens subsp. laumondii).